Reading from the N-terminus, the 400-residue chain is MKLADLSSPAFLENPYPLYETLRRQGSFVSIGPNALMTGRYSIVDGLLHNRNMGKSYMESIRVRYGDDALDMPLFQGFNRMFLMLNPPVHTHLRGLVMQAFTGRESESMRPLATDTAHRLIDDFEQKSSVDLVTEFSFPLPMRIICRMMDVDISDAISLSVAVSNIAKVLDPAPMSPDELVHASAAYEELAHYFTRLIELRRAQPGTDLISMLLRAEEEGQKLTHDEIVSNVILLLLGGYETTSNMIGNALIALHRHPKQLARLKSDLSLMPQAILECLRYDGSVQFTMRAAMDDVSIEGDVVPRGTIVFLMLGAANRDPAQFTDPDHLDITRKQGRLQSFGAGVHHCLGYRLALVELECALTVLLERLPHLRLANLDTLSWNQRGNLRGVNALIADLHS.

Heme is bound at residue Cys-348.

This sequence belongs to the cytochrome P450 family. Requires heme as cofactor.

This Xylella fastidiosa (strain 9a5c) protein is Putative cytochrome P450 133B2 (cyp133B2).